A 71-amino-acid polypeptide reads, in one-letter code: ATP synthase F(0) complex subunit e, mitochondrial (71 aa).

Position 34 is an N6-acetyllysine (Lys-34). The residue at position 68 (Ser-68) is a Phosphoserine.

The protein belongs to the ATPase e subunit family. In terms of assembly, component of the ATP synthase complex composed at least of ATP5F1A/subunit alpha, ATP5F1B/subunit beta, ATP5MC1/subunit c (homooctomer), MT-ATP6/subunit a, MT-ATP8/subunit 8, ATP5ME/subunit e, ATP5MF/subunit f, ATP5MG/subunit g, ATP5MK/subunit k, ATP5MJ/subunit j, ATP5F1C/subunit gamma, ATP5F1D/subunit delta, ATP5F1E/subunit epsilon, ATP5PF/subunit F6, ATP5PB/subunit b, ATP5PD/subunit d, ATP5PO/subunit OSCP. ATP synthase complex consists of a soluble F(1) head domain (subunits alpha(3) and beta(3)) - the catalytic core - and a membrane F(0) domain - the membrane proton channel (subunits c, a, 8, e, f, g, k and j). These two domains are linked by a central stalk (subunits gamma, delta, and epsilon) rotating inside the F1 region and a stationary peripheral stalk (subunits F6, b, d, and OSCP).

The protein localises to the mitochondrion. The protein resides in the mitochondrion inner membrane. Its function is as follows. Subunit e, of the mitochondrial membrane ATP synthase complex (F(1)F(0) ATP synthase or Complex V) that produces ATP from ADP in the presence of a proton gradient across the membrane which is generated by electron transport complexes of the respiratory chain. ATP synthase complex consist of a soluble F(1) head domain - the catalytic core - and a membrane F(1) domain - the membrane proton channel. These two domains are linked by a central stalk rotating inside the F(1) region and a stationary peripheral stalk. During catalysis, ATP synthesis in the catalytic domain of F(1) is coupled via a rotary mechanism of the central stalk subunits to proton translocation. In vivo, can only synthesize ATP although its ATP hydrolase activity can be activated artificially in vitro. Part of the complex F(0) domain. The sequence is that of ATP synthase F(0) complex subunit e, mitochondrial from Rattus norvegicus (Rat).